Here is a 578-residue protein sequence, read N- to C-terminus: Adenine deaminase (578 aa).

The protein belongs to the metallo-dependent hydrolases superfamily. Adenine deaminase family. The cofactor is Mn(2+).

The enzyme catalyses adenine + H2O + H(+) = hypoxanthine + NH4(+). In Ligilactobacillus salivarius (strain UCC118) (Lactobacillus salivarius), this protein is Adenine deaminase.